The following is a 76-amino-acid chain: High-potential iron-sulfur protein isozyme 2 (76 aa).

[4Fe-4S] cluster contacts are provided by cysteine 38, cysteine 41, cysteine 54, and cysteine 70.

It belongs to the high-potential iron-sulfur protein (HiPIP) family. In terms of assembly, homodimer.

In terms of biological role, specific class of high-redox-potential 4Fe-4S ferredoxins. Functions in anaerobic electron transport in most purple and in some other photosynthetic bacteria and in at least one genus (Paracoccus) of halophilic, denitrifying bacteria. The chain is High-potential iron-sulfur protein isozyme 2 (hip2) from Halorhodospira halophila (Ectothiorhodospira halophila).